Consider the following 318-residue polypeptide: MDQDAFILKEDSEVEREAPGGRESLSDVIGFLDAVLSSEPTDIGGDRSWLHNTINTPQGPGSAHRAKSEGEGEVSTPSTQDNRSGEESRVSGRTSKPEAEAHAGNLDKQNIHRAFGGRTGTNSVSQDLGDGGDSGILENPPNERGYPRSGIEDENREMAAHPDKRGEDQAEGLPEEVRGGTSLPDEGEGGASNNGRSMEPGSSHSARVTGVLVIPSPELEEAVLRRNKRRPTNSGSKPLTPATVPGTRSPPLNRYNSTGSPPGKPPSTQDEHINSGDTPAVRVKDRKPPIGTRSVSDCPANGRPIHPGLESDSTKKGA.

2 disordered regions span residues 1 to 23 (MDQD…GGRE) and 38 to 318 (SEPT…KKGA). Over residues 7-20 (ILKEDSEVEREAPG) the composition is skewed to basic and acidic residues. Positions 50–59 (LHNTINTPQG) are enriched in polar residues. Position 68 is a phosphoserine; by host (Ser68). Basic and acidic residues predominate over residues 83 to 101 (RSGEESRVSGRTSKPEAEA). Ser125 bears the Phosphoserine; by host mark. Positions 150-168 (GIEDENREMAAHPDKRGED) are enriched in basic and acidic residues. Over residues 191–206 (ASNNGRSMEPGSSHSA) the composition is skewed to polar residues. 4 positions are modified to phosphoserine; by host: Ser192, Ser249, Ser257, and Ser260.

The polypeptide is Protein W (P/V/C) (Sendai virus (strain Harris) (SeV)).